Here is a 333-residue protein sequence, read N- to C-terminus: Glyceraldehyde-3-phosphate dehydrogenase (333 aa).

Ser1 is subject to N-acetylserine. NAD(+) is bound by residues 10–11 (RI), Asp31, and Met76. D-glyceraldehyde 3-phosphate is bound by residues 147–149 (SCT), Thr178, 207–208 (TG), and Arg230. The active-site Nucleophile is Cys148. Residue Asn312 participates in NAD(+) binding.

The protein belongs to the glyceraldehyde-3-phosphate dehydrogenase family. In terms of assembly, homotetramer.

The protein localises to the cytoplasm. It carries out the reaction D-glyceraldehyde 3-phosphate + phosphate + NAD(+) = (2R)-3-phospho-glyceroyl phosphate + NADH + H(+). Its pathway is carbohydrate degradation; glycolysis; pyruvate from D-glyceraldehyde 3-phosphate: step 1/5. This is Glyceraldehyde-3-phosphate dehydrogenase from Panulirus versicolor (Painted spiny lobster).